The following is a 286-amino-acid chain: ATP synthase gamma chain (286 aa).

This sequence belongs to the ATPase gamma chain family. F-type ATPases have 2 components, CF(1) - the catalytic core - and CF(0) - the membrane proton channel. CF(1) has five subunits: alpha(3), beta(3), gamma(1), delta(1), epsilon(1). CF(0) has three main subunits: a, b and c.

The protein localises to the cell membrane. In terms of biological role, produces ATP from ADP in the presence of a proton gradient across the membrane. The gamma chain is believed to be important in regulating ATPase activity and the flow of protons through the CF(0) complex. The protein is ATP synthase gamma chain of Ureaplasma urealyticum serovar 10 (strain ATCC 33699 / Western).